We begin with the raw amino-acid sequence, 154 residues long: SsrA-binding protein (154 aa).

The protein belongs to the SmpB family.

Its subcellular location is the cytoplasm. Its function is as follows. Required for rescue of stalled ribosomes mediated by trans-translation. Binds to transfer-messenger RNA (tmRNA), required for stable association of tmRNA with ribosomes. tmRNA and SmpB together mimic tRNA shape, replacing the anticodon stem-loop with SmpB. tmRNA is encoded by the ssrA gene; the 2 termini fold to resemble tRNA(Ala) and it encodes a 'tag peptide', a short internal open reading frame. During trans-translation Ala-aminoacylated tmRNA acts like a tRNA, entering the A-site of stalled ribosomes, displacing the stalled mRNA. The ribosome then switches to translate the ORF on the tmRNA; the nascent peptide is terminated with the 'tag peptide' encoded by the tmRNA and targeted for degradation. The ribosome is freed to recommence translation, which seems to be the essential function of trans-translation. The polypeptide is SsrA-binding protein (Staphylococcus saprophyticus subsp. saprophyticus (strain ATCC 15305 / DSM 20229 / NCIMB 8711 / NCTC 7292 / S-41)).